Here is a 133-residue protein sequence, read N- to C-terminus: Phosphoribosyl-AMP cyclohydrolase (133 aa).

Residue Asp-82 coordinates Mg(2+). Cys-83 lines the Zn(2+) pocket. Mg(2+) contacts are provided by Asp-84 and Asp-86. Residues Cys-100 and Cys-107 each coordinate Zn(2+).

This sequence belongs to the PRA-CH family. As to quaternary structure, homodimer. Mg(2+) is required as a cofactor. It depends on Zn(2+) as a cofactor.

The protein localises to the cytoplasm. The enzyme catalyses 1-(5-phospho-beta-D-ribosyl)-5'-AMP + H2O = 1-(5-phospho-beta-D-ribosyl)-5-[(5-phospho-beta-D-ribosylamino)methylideneamino]imidazole-4-carboxamide. The protein operates within amino-acid biosynthesis; L-histidine biosynthesis; L-histidine from 5-phospho-alpha-D-ribose 1-diphosphate: step 3/9. Functionally, catalyzes the hydrolysis of the adenine ring of phosphoribosyl-AMP. This Aromatoleum aromaticum (strain DSM 19018 / LMG 30748 / EbN1) (Azoarcus sp. (strain EbN1)) protein is Phosphoribosyl-AMP cyclohydrolase.